The sequence spans 294 residues: Non-selective voltage-gated ion channel VDAC2 (294 aa).

Ala-2 is subject to N-acetylalanine. ATP is bound by residues Lys-23 and Lys-31. Lys-31 bears the N6-acetyllysine; alternate mark. Lys-31 is subject to N6-succinyllysine; alternate. A Glycyl lysine isopeptide (Lys-Gly) (interchain with G-Cter in ubiquitin); alternate cross-link involves residue Lys-31. Beta stranded transmembrane passes span 37 to 46 and 50 to 58; these read LVKLDVKTKS and VEFSTSGSS. Lys-64 participates in a covalent cross-link: Glycyl lysine isopeptide (Lys-Gly) (interchain with G-Cter in ubiquitin). A beta stranded membrane pass occupies residues 65–75; it reads VTGTLETKYKW. A Phosphotyrosine modification is found at Tyr-78. The next 3 beta stranded transmembrane spans lie at 80 to 87, 91 to 100, and 106 to 115; these read LTFTEKWN, TLGTEIAIED, and LKLTFDTTFS. Thr-118 carries the post-translational modification Phosphothreonine. At Lys-120 the chain carries N6-acetyllysine; alternate. Lys-120 participates in a covalent cross-link: Glycyl lysine isopeptide (Lys-Gly) (interchain with G-Cter in ubiquitin); alternate. Lys-121 participates in a covalent cross-link: Glycyl lysine isopeptide (Lys-Gly) (interchain with G-Cter in ubiquitin). Beta stranded transmembrane passes span 122-131, 134-141, 148-156, and 161-169; these read SGKIKSSYKR, INLGCDVD, AIHGSAVFG, and LAGYQMTFD. Residue Lys-172 forms a Glycyl lysine isopeptide (Lys-Gly) (interchain with G-Cter in ubiquitin) linkage. 6 beta stranded membrane passes run 174 to 186, 189 to 196, 200 to 209, 213 to 222, 229 to 238, and 242 to 249; these read KLTR…GYRT, FQLHTNVN, EFGGSIYQKV, LDTSVNLAWT, RFGIAAKYQL, and ASISAKVN. Ser-251 is modified (phosphoserine). Residues 253-255 and 271-275 each bind NAD(+); these read LIG and SALVD. 2 consecutive transmembrane segments (beta stranded) span residues 253-262 and 265-274; these read LIGVGYTQTL and GVKLTLSALV. Lys-277 bears the N6-acetyllysine; alternate mark. Lys-277 participates in a covalent cross-link: Glycyl lysine isopeptide (Lys-Gly) (interchain with G-Cter in ubiquitin); alternate. The chain crosses the membrane as a beta stranded span at residues 284 to 293; the sequence is HKLGLALELE.

It belongs to the eukaryotic mitochondrial porin family. In terms of assembly, monomer, homodimer and higher order oligomers; formation of higher order structures is necessary for scramblase activity. Interacts with ARMC12 in a TBC1D21-dependent manner. Interacts with KLC3. Interacts with SPATA33. Interacts with PPP3CC in a SPATA33-dependent manner. Ubiquitinated by PRKN during mitophagy, leading to its degradation and enhancement of mitophagy. Deubiquitinated by USP30.

The protein resides in the mitochondrion outer membrane. Its subcellular location is the membrane. The enzyme catalyses chloride(in) = chloride(out). The catalysed reaction is K(+)(in) = K(+)(out). It carries out the reaction a 1,2-diacyl-sn-glycero-3-phospho-L-serine(in) = a 1,2-diacyl-sn-glycero-3-phospho-L-serine(out). It catalyses the reaction a 1,2-diacyl-sn-glycero-3-phosphocholine(in) = a 1,2-diacyl-sn-glycero-3-phosphocholine(out). The enzyme catalyses a 1,2-diacyl-sn-glycero-3-phospho-(1D-myo-inositol)(in) = a 1,2-diacyl-sn-glycero-3-phospho-(1D-myo-inositol)(out). Functionally, non-selective voltage-gated ion channel that mediates the transport of anions and cations through the mitochondrion outer membrane and plasma membrane. The channel adopts an open conformation at zero mV and a closed conformation at both positive and negative potentials. There are two populations of channels; the main that functions in a lower open-state conductance with lower ion selectivity, that switch, in a voltage-dependent manner, from the open to a low-conducting 'closed' state and the other that has a normal ion selectivity in the typical high conductance, 'open' state. Binds various lipids, including the sphingolipid ceramide, the phospholipid phosphatidylcholine, and the sterols cholesterol and oxysterol. Binding of ceramide promotes the mitochondrial outer membrane permeabilization (MOMP) apoptotic pathway. In terms of biological role, catalyzes the scrambling of phospholipids across the outer mitochondrial membrane; the mechanism is unrelated to channel activity and is capable of translocating both anionic and zwitterionic phospholipids. The protein is Non-selective voltage-gated ion channel VDAC2 of Bos taurus (Bovine).